Here is a 255-residue protein sequence, read N- to C-terminus: Glioma pathogenesis-related protein 1 (255 aa).

Positions 1-17 (MQVILAVIVWMASSVSS) are cleaved as a signal peptide. The SCP domain maps to 39–164 (QVHNQLRSKV…PNGANFICDY (126 aa)). Residues 224–244 (SLFLIAKSVLLLLSVIITIWV) form a helical membrane-spanning segment.

The protein belongs to the CRISP family.

It is found in the membrane. This is Glioma pathogenesis-related protein 1 (Glipr1) from Mus musculus (Mouse).